A 183-amino-acid chain; its full sequence is Ribosome-binding factor A (183 aa).

The tract at residues 132 to 183 (PAGEADPYRDNGSVAQSPAPGGLGIRTSDGPEAVEAPLTCGGDTGDDDRPKE) is disordered.

The protein belongs to the RbfA family. As to quaternary structure, monomer. Binds 30S ribosomal subunits, but not 50S ribosomal subunits or 70S ribosomes.

It localises to the cytoplasm. One of several proteins that assist in the late maturation steps of the functional core of the 30S ribosomal subunit. Associates with free 30S ribosomal subunits (but not with 30S subunits that are part of 70S ribosomes or polysomes). Required for efficient processing of 16S rRNA. May interact with the 5'-terminal helix region of 16S rRNA. The sequence is that of Ribosome-binding factor A from Mycobacterium tuberculosis (strain ATCC 25177 / H37Ra).